The chain runs to 140 residues: Nucleoside diphosphate kinase (140 aa).

ATP is bound by residues K11, F59, R87, T93, R104, and N114. The Pros-phosphohistidine intermediate role is filled by H117.

This sequence belongs to the NDK family. In terms of assembly, homotetramer. It depends on Mg(2+) as a cofactor.

Its subcellular location is the cytoplasm. It carries out the reaction a 2'-deoxyribonucleoside 5'-diphosphate + ATP = a 2'-deoxyribonucleoside 5'-triphosphate + ADP. It catalyses the reaction a ribonucleoside 5'-diphosphate + ATP = a ribonucleoside 5'-triphosphate + ADP. Its function is as follows. Major role in the synthesis of nucleoside triphosphates other than ATP. The ATP gamma phosphate is transferred to the NDP beta phosphate via a ping-pong mechanism, using a phosphorylated active-site intermediate. This is Nucleoside diphosphate kinase from Novosphingobium aromaticivorans (strain ATCC 700278 / DSM 12444 / CCUG 56034 / CIP 105152 / NBRC 16084 / F199).